Reading from the N-terminus, the 386-residue chain is Galactokinase (386 aa).

Residue 35-38 (EHTD) participates in substrate binding. ATP contacts are provided by residues serine 69 and 125 to 131 (GAGLSSS). Residues serine 131 and glutamate 163 each contribute to the Mg(2+) site. The Proton acceptor role is filled by aspartate 175. Tyrosine 224 lines the substrate pocket.

This sequence belongs to the GHMP kinase family. GalK subfamily.

The protein localises to the cytoplasm. It carries out the reaction alpha-D-galactose + ATP = alpha-D-galactose 1-phosphate + ADP + H(+). It functions in the pathway carbohydrate metabolism; galactose metabolism. In terms of biological role, catalyzes the transfer of the gamma-phosphate of ATP to D-galactose to form alpha-D-galactose-1-phosphate (Gal-1-P). The polypeptide is Galactokinase (Vibrio vulnificus (strain YJ016)).